Consider the following 378-residue polypeptide: Anhydro-N-acetylmuramic acid kinase (378 aa).

9-16 (GTSVDGID) provides a ligand contact to ATP.

It belongs to the anhydro-N-acetylmuramic acid kinase family.

It catalyses the reaction 1,6-anhydro-N-acetyl-beta-muramate + ATP + H2O = N-acetyl-D-muramate 6-phosphate + ADP + H(+). Its pathway is amino-sugar metabolism; 1,6-anhydro-N-acetylmuramate degradation. It functions in the pathway cell wall biogenesis; peptidoglycan recycling. Catalyzes the specific phosphorylation of 1,6-anhydro-N-acetylmuramic acid (anhMurNAc) with the simultaneous cleavage of the 1,6-anhydro ring, generating MurNAc-6-P. Is required for the utilization of anhMurNAc either imported from the medium or derived from its own cell wall murein, and thus plays a role in cell wall recycling. This Microcystis aeruginosa (strain NIES-843 / IAM M-2473) protein is Anhydro-N-acetylmuramic acid kinase.